The primary structure comprises 506 residues: Probable E3 ubiquitin-protein ligase ARI14 (506 aa).

A TRIAD supradomain region spans residues 79–308 (PDSSSEISLE…VDSGFCIKTE (230 aa)). The segment at 83–140 (SEISLETDVYEFDGDNDLISMPFCSHKFDSKYWREYLEKNFYYVEKIQTTISCPDQDC) adopts an RING-type 1 zinc-finger fold. Residues Cys-106, His-108, Cys-135, Cys-140, Cys-180, Cys-185, Cys-207, Cys-209, Cys-214, Cys-217, His-222, Cys-227, Cys-258, Cys-261, Cys-277, Cys-279, Cys-284, Cys-287, His-294, and Cys-304 each coordinate Zn(2+). The IBR-type zinc-finger motif lies at 158 to 227 (EMYERYIWRS…RLESHRPVSC (70 aa)). An RING-type 2; atypical zinc finger spans residues 258–287 (CPHCLCSLESDTKMPQFLTCVCRLRFCSRC). Residues 462–492 (GTGPFWYCDRCTYANTWEDNECEMCYDDSAS) form a RanBP2-type zinc finger.

The protein belongs to the RBR family. Ariadne subfamily. Zn(2+) is required as a cofactor. Mostly expressed in closed flowers and, to a lower extent, in pollen.

It carries out the reaction [E2 ubiquitin-conjugating enzyme]-S-ubiquitinyl-L-cysteine + [acceptor protein]-L-lysine = [E2 ubiquitin-conjugating enzyme]-L-cysteine + [acceptor protein]-N(6)-ubiquitinyl-L-lysine.. It participates in protein modification; protein ubiquitination. In terms of biological role, might act as an E3 ubiquitin-protein ligase, or as part of E3 complex, which accepts ubiquitin from specific E2 ubiquitin-conjugating enzymes and then transfers it to substrates. Negatively regulates male gametophyte formation and double fertilization. In Arabidopsis thaliana (Mouse-ear cress), this protein is Probable E3 ubiquitin-protein ligase ARI14.